The primary structure comprises 739 residues: Prestin (739 aa).

Over M1–P76 the chain is Cytoplasmic. The helical transmembrane segment at L77–A106 threads the bilayer. Topologically, residues A107–P109 are extracellular. A helical transmembrane segment spans residues P110–F127. Topologically, residues G128 to F138 are cytoplasmic. The chain crosses the membrane as a helical span at residues A139–E152. The Extracellular portion of the chain corresponds to A153–V169. N-linked (GlcNAc...) asparagine glycosylation is found at N161 and N164. The chain crosses the membrane as a helical span at residues N170–L199. Over R200 to T209 the chain is Cytoplasmic. The chain crosses the membrane as a helical span at residues E210–L233. Topologically, residues G234 to L244 are extracellular. The helical intramembrane region spans S245–N256. The Extracellular segment spans residues I257–N261. Residues I262–F285 form a helical membrane-spanning segment. The Cytoplasmic segment spans residues K286–P294. A helical transmembrane segment spans residues G295 to M310. Residues L311–D335 are Extracellular-facing. The helical transmembrane segment at F336–Y370 threads the bilayer. At S371 to D373 the chain is on the cytoplasmic side. The chain crosses the membrane as a helical span at residues G374 to F391. The Extracellular portion of the chain corresponds to H392–S399. A helical membrane pass occupies residues M400–T409. S401 contributes to the salicylate binding site. At G410–T413 the chain is on the cytoplasmic side. The helical transmembrane segment at E414–F435 threads the bilayer. The Extracellular segment spans residues Q436–P439. A helical membrane pass occupies residues T440 to K467. A topological domain (cytoplasmic) is located at residue S468. Residues K469 to L484 traverse the membrane as a helical segment. Topologically, residues L485–G486 are extracellular. Residues L487 to Q507 traverse the membrane as a helical segment. Positions R508–D731 are extended region for STAS domain. At R508 to H739 the chain is on the cytoplasmic side. In terms of domain architecture, STAS spans E528–C726.

Belongs to the SLC26A/SulP transporter (TC 2.A.53) family. Homodimer. Interacts (via STAS domain) with CALM; this interaction is calcium-dependent. In terms of tissue distribution, expressed in hair cells of the auditory organs.

The protein localises to the cell membrane. The enzyme catalyses oxalate(in) + chloride(out) = oxalate(out) + chloride(in). It catalyses the reaction sulfate(out) + chloride(in) = sulfate(in) + chloride(out). Its activity is regulated as follows. Sulfate/chloride antiport activity is inhibited by salicylate; this inhibition is reversible. Electrogenic antiporter that exchanges sulfate or oxalate for chloride ion in a strictly coupled manner with a 1:1 stoichiometry. Adopts a dynamic conformation, which alternates between the exposure of the central binding site to the extra- and intracellular solutions leading to an inward-to-outward conformational transition during the transport cycle. Generates voltage-dependent charge movements resembling to the non-linear capacitance (NLC) of the cell membrane, but which are not associated to electromotile activity. The sequence is that of Prestin from Danio rerio (Zebrafish).